The following is a 324-amino-acid chain: Quinolinate synthase 1 (324 aa).

Iminosuccinate is bound by residues H48 and S66. Residue C111 coordinates [4Fe-4S] cluster. Residues 137 to 139 (YVN) and S154 each bind iminosuccinate. C196 is a [4Fe-4S] cluster binding site. Iminosuccinate contacts are provided by residues 222 to 224 (HPE) and T239. C282 serves as a coordination point for [4Fe-4S] cluster.

The protein belongs to the quinolinate synthase family. Type 2 subfamily. The cofactor is [4Fe-4S] cluster.

It localises to the cytoplasm. It carries out the reaction iminosuccinate + dihydroxyacetone phosphate = quinolinate + phosphate + 2 H2O + H(+). It functions in the pathway cofactor biosynthesis; NAD(+) biosynthesis; quinolinate from iminoaspartate: step 1/1. Catalyzes the condensation of iminoaspartate with dihydroxyacetone phosphate to form quinolinate. This is Quinolinate synthase 1 from Mesorhizobium japonicum (strain LMG 29417 / CECT 9101 / MAFF 303099) (Mesorhizobium loti (strain MAFF 303099)).